We begin with the raw amino-acid sequence, 874 residues long: Cellulose synthase catalytic subunit [UDP-forming] (874 aa).

Helical transmembrane passes span 30–50 (SPFS…VFPL), 151–171 (ILGV…TQPF), 173–193 (PLSQ…VRRM), and 230–250 (LVCG…LVLG). The catalytic subdomain A stretch occupies residues 271-364 (QWPTVDIFVP…FVAIFDCDHV (94 aa)). Asp-313 is an active-site residue. The substrate site is built by Asp-360 and Asp-362. The interval 441–501 (KPLDEIGGIA…GQRIRWARGM (61 aa)) is catalytic subdomain B. The active site involves Asp-457. 5 helical membrane passes run 525 to 545 (LNAM…TAPL), 547 to 567 (FLLL…LFVI), 592 to 612 (IYET…LINP), 634 to 654 (VISR…AAGV), and 668 to 688 (VIVS…AVAV). One can recognise a PilZ domain in the interval 694–790 (QVRRAHRVEI…QHIDFVQCTF (97 aa)). The chain crosses the membrane as a helical span at residues 833-853 (SVKVIFRSLTALIAWIVSFIP).

It belongs to the glycosyltransferase 2 family. Requires Mg(2+) as cofactor.

The protein localises to the cell inner membrane. It catalyses the reaction [(1-&gt;4)-beta-D-glucosyl](n) + UDP-alpha-D-glucose = [(1-&gt;4)-beta-D-glucosyl](n+1) + UDP + H(+). Its pathway is glycan metabolism; bacterial cellulose biosynthesis. Its activity is regulated as follows. Activated by bis-(3'-5') cyclic diguanylic acid (c-di-GMP). Catalytic subunit of cellulose synthase. It polymerizes uridine 5'-diphosphate glucose to cellulose, which is produced as an extracellular component for mechanical and chemical protection at the onset of the stationary phase, when the cells exhibit multicellular behavior (rdar morphotype). Coexpression of cellulose and thin aggregative fimbriae leads to a hydrophobic network with tightly packed cells embedded in a highly inert matrix. The chain is Cellulose synthase catalytic subunit [UDP-forming] (bcsA) from Salmonella typhi.